Here is a 595-residue protein sequence, read N- to C-terminus: MSIPQSKSSSNGFPLKRGETEEVLHKTNTSNTVFNGEAGSLKRLSLDRLVYFTTCKIGHHVEVHLRNGSVYTGIFHAANVEKDFGIILKMACLIKDGTLRGHKSRSEFVRKPPSKTFIIPADELVQVIAKDLSVSSNNMSNAVQGEKPSELLTDSSISQSYHVDRERQLQRWVPDETIPHGADLENVFDNPWNRKWNQFEVNKSLFGVKSTFDEDLYTTRLERGPQTKQLEEHAQKIAREIEAETTRDIHVAEERGLQLNENFDFDEEARYSSVRPVTGFGDSGFDLEDNALLDTCNDLTFGGSSTSDGQKPASSGKGCEELRVSGDSQSSRKNKNVDQSCSTSKQQSKDFPAAGSNISESQLDEQRRKNNEEVSHNNRSAEESTSGHGDIKEGAKSGGGASSVSKAVTEREREASQVSSKTKSESSFGQSASRSSESRPGPSTSSRPGLSPSSSIGSMASSEKSTLNPNAKEFKLNPKAKSFKPLQSAAAPPQSPIADASFYYPGPSHVPVQQMPGMPPVNYGLPPYPGNQPQMMYHPQAYYHPNGQPQYPQQQMIPGQQQQQMIPGQQHPRPVYYMHPPPYPQDMPYHNKGRE.

One can recognise a Sm domain in the interval 48–113 (RLVYFTTCKI…SRSEFVRKPP (66 aa)). Composition is skewed to polar residues over residues 302–313 (GGSSTSDGQKPA) and 326–346 (GDSQ…TSKQ). Disordered stretches follow at residues 302–505 (GGSS…FYYP) and 536–595 (MYHP…KGRE). The segment covering 364 to 382 (DEQRRKNNEEVSHNNRSAE) has biased composition (basic and acidic residues). The span at 416 to 465 (SQVSSKTKSESSFGQSASRSSESRPGPSTSSRPGLSPSSSIGSMASSEKS) shows a compositional bias: low complexity. The PAM2-like 1; degenerate signature appears at 466-474 (TLNPNAKEF). The short motif at 475–485 (KLNPKAKSFKP) is the PAM2-like 2 element. 2 stretches are compositionally biased toward low complexity: residues 488–501 (SAAA…ADAS) and 548–570 (QPQY…PGQQ).

In terms of tissue distribution, expressed in cauline leaves, stems, rosette leaves, immature siliques and primary inflorescences.

In Arabidopsis thaliana (Mouse-ear cress), this protein is Polyadenylate-binding protein-interacting protein 4 (CID4).